A 229-amino-acid polypeptide reads, in one-letter code: Ribonuclease 3 (229 aa).

One can recognise an RNase III domain in the interval Leu-5 to Gly-127. Glu-40 serves as a coordination point for Mg(2+). Residue Asp-44 is part of the active site. 2 residues coordinate Mg(2+): Asp-113 and Glu-116. Glu-116 is a catalytic residue. The DRBM domain occupies Asp-154–Val-224.

It belongs to the ribonuclease III family. Homodimer. Mg(2+) serves as cofactor.

The protein resides in the cytoplasm. It carries out the reaction Endonucleolytic cleavage to 5'-phosphomonoester.. Functionally, digests double-stranded RNA. Involved in the processing of primary rRNA transcript to yield the immediate precursors to the large and small rRNAs (23S and 16S). Processes some mRNAs, and tRNAs when they are encoded in the rRNA operon. Processes pre-crRNA and tracrRNA of type II CRISPR loci if present in the organism. This Pseudomonas fluorescens (strain SBW25) protein is Ribonuclease 3.